The sequence spans 158 residues: 6,7-dimethyl-8-ribityllumazine synthase (158 aa).

Residues phenylalanine 18, 50-52, and 74-76 each bind 5-amino-6-(D-ribitylamino)uracil; these read SYD and AVI. A (2S)-2-hydroxy-3-oxobutyl phosphate-binding site is contributed by 79-80; it reads ET. Histidine 82 serves as the catalytic Proton donor. Leucine 107 lines the 5-amino-6-(D-ribitylamino)uracil pocket. Arginine 122 is a (2S)-2-hydroxy-3-oxobutyl phosphate binding site.

It belongs to the DMRL synthase family.

The catalysed reaction is (2S)-2-hydroxy-3-oxobutyl phosphate + 5-amino-6-(D-ribitylamino)uracil = 6,7-dimethyl-8-(1-D-ribityl)lumazine + phosphate + 2 H2O + H(+). It functions in the pathway cofactor biosynthesis; riboflavin biosynthesis; riboflavin from 2-hydroxy-3-oxobutyl phosphate and 5-amino-6-(D-ribitylamino)uracil: step 1/2. Catalyzes the formation of 6,7-dimethyl-8-ribityllumazine by condensation of 5-amino-6-(D-ribitylamino)uracil with 3,4-dihydroxy-2-butanone 4-phosphate. This is the penultimate step in the biosynthesis of riboflavin. The protein is 6,7-dimethyl-8-ribityllumazine synthase of Sulfolobus acidocaldarius (strain ATCC 33909 / DSM 639 / JCM 8929 / NBRC 15157 / NCIMB 11770).